Reading from the N-terminus, the 429-residue chain is D-amino acid dehydrogenase (429 aa).

Residue Val3 to Tyr17 participates in FAD binding.

It belongs to the DadA oxidoreductase family. It depends on FAD as a cofactor.

It catalyses the reaction a D-alpha-amino acid + A + H2O = a 2-oxocarboxylate + AH2 + NH4(+). The protein operates within amino-acid degradation; D-alanine degradation; NH(3) and pyruvate from D-alanine: step 1/1. In terms of biological role, oxidative deamination of D-amino acids. This is D-amino acid dehydrogenase from Paraburkholderia xenovorans (strain LB400).